A 435-amino-acid chain; its full sequence is Large ribosomal subunit protein mL65 (435 aa).

It belongs to the mitochondrion-specific ribosomal protein mL65 family. As to quaternary structure, component of the mitochondrial ribosome small subunit (28S) which comprises a 12S rRNA and about 30 distinct proteins.

Its subcellular location is the mitochondrion. This Bos taurus (Bovine) protein is Large ribosomal subunit protein mL65 (MRPS30).